Here is a 911-residue protein sequence, read N- to C-terminus: Alpha-actinin-4 (911 aa).

A disordered region spans residues 1-30 (MVDYHAASQSYQYGPSSAGNGAGGGGSMGD). The tract at residues 1–269 (MVDYHAASQS…YVSSFYHAFS (269 aa)) is actin-binding. Residues 12 to 26 (QYGPSSAGNGAGGGG) form an interaction with VCL region. Residue tyrosine 31 is modified to Phosphotyrosine. The interaction with VCL stretch occupies residues 40–61 (RDLLLDPAWEKQQRKTFTAWCN). Calponin-homology (CH) domains are found at residues 50 to 154 (KQQR…LRFA) and 163 to 269 (TSAK…HAFS). The short motif at 84–88 (LMLLL) is the LXXLL motif element. The segment at 108–126 (KINNVNKALDFIASKGVKL) is interaction with VCL. The residue at position 114 (lysine 114) is an N6-acetyllysine. The interval 177–192 (TAPYKNVNVQNFHISW) is polyphosphoinositide (PIP2)-binding. An N6-acetyllysine modification is found at lysine 214. Threonine 249 carries the post-translational modification Phosphothreonine. 4 Spectrin repeats span residues 293–403 (HLME…WLLN), 413–518 (HLAE…ALEK), 528–639 (QLHL…ALLE), and 649–752 (HLRR…EVEN). 2 positions are modified to N6-acetyllysine: lysine 592 and lysine 625. Residue serine 696 is modified to Phosphoserine. The mediates interaction with MICALL2 stretch occupies residues 736–911 (WEQLLTTIAR…STALYGESDL (176 aa)). 2 EF-hand domains span residues 765–800 (EQMQ…LGYD) and 806–841 (QGEA…ETTD). Aspartate 778 is a binding site for Ca(2+). Lysine 779 carries the N6-acetyllysine modification. 2 residues coordinate Ca(2+): aspartate 780 and glutamate 789. Lysine 859 bears the N6-acetyllysine mark. Serine 909 carries the post-translational modification Phosphoserine.

Belongs to the alpha-actinin family. In terms of assembly, homodimer; antiparallel. Identified in a IGF2BP1-dependent mRNP granule complex containing untranslated mRNAs. Component of the CART complex, at least composed of ACTN4, HGS/HRS, MYO5B and TRIM3. Binds TRIM3 at the N-terminus. Interacts with MAGI1. Interacts with PDLIM2. Identified in a complex with CASK, IQGAP1, MAGI2, NPHS1, SPTAN1 and SPTBN1. Interacts with MICALL2 (preferentially in opened conformation); stimulated by RAB13 activation. Interacts with PPARG and RARA. Binds to VCL; this interaction triggers VCL conformational changes. Interacts with SEPTIN14. Interacts with IGSF8.

The protein localises to the nucleus. Its subcellular location is the cytoplasm. It is found in the cell junction. The protein resides in the cytoskeleton. It localises to the stress fiber. The protein localises to the perinuclear region. F-actin cross-linking protein which is thought to anchor actin to a variety of intracellular structures. This is a bundling protein. Probably involved in vesicular trafficking via its association with the CART complex. The CART complex is necessary for efficient transferrin receptor recycling but not for EGFR degradation. Involved in tight junction assembly in epithelial cells probably through interaction with MICALL2. Links MICALL2 to the actin cytoskeleton and recruits it to the tight junctions. May also function as a transcriptional coactivator, stimulating transcription mediated by the nuclear hormone receptors PPARG and RARA. Association with IGSF8 regulates the immune synapse formation and is required for efficient T-cell activation. This Pongo abelii (Sumatran orangutan) protein is Alpha-actinin-4.